Consider the following 561-residue polypeptide: Phosphoinositide phospholipase C 1 (561 aa).

One can recognise an EF-hand domain in the interval 21–54 (EPPEEIKNLFHDYSQDDRMSADEMLRFVIQVQGE). A PI-PLC X-box domain is found at 105–249 (QDMNQPLSHY…LKNKILISTK (145 aa)). Residues His120 and His166 contribute to the active site. The segment covering 256-266 (QTQISKGSTTD) has biased composition (polar residues). The interval 256–285 (QTQISKGSTTDESTRAKKISDAEEQVQEED) is disordered. Residues 267–276 (ESTRAKKISD) are compositionally biased toward basic and acidic residues. Positions 294–410 (RDLISIHAGN…GYVKKPDVLL (117 aa)) constitute a PI-PLC Y-box domain. A C2 domain is found at 414 to 541 (PEGEIFDPCS…PGIRAVRLHD (128 aa)). Residues Asp452, Asp458, Asp510, Asp512, and Asp518 each coordinate Ca(2+).

Ca(2+) serves as cofactor. In terms of tissue distribution, expressed in stems, leaves, roots, flowers and siliques. Predominant in the vascular tissues of roots and leaves.

The protein localises to the cell membrane. It carries out the reaction a 1,2-diacyl-sn-glycero-3-phospho-(1D-myo-inositol-4,5-bisphosphate) + H2O = 1D-myo-inositol 1,4,5-trisphosphate + a 1,2-diacyl-sn-glycerol + H(+). The production of the second messenger molecules diacylglycerol (DAG) and inositol 1,4,5-trisphosphate (IP3) is mediated by activated phosphatidylinositol-specific phospholipase C enzymes. Required for secondary responses to abscisic acid signals. This is Phosphoinositide phospholipase C 1 (PLC1) from Arabidopsis thaliana (Mouse-ear cress).